Consider the following 203-residue polypeptide: MRLTRDFYAKDARALAKELLGKVLVREVDGIKLKGKIVETEAYIGAIDKASHAYGGRRTKRTEPLYGKPGIAYVYFIYGKYFCFNIISKTEGEAEGVLIRALEPLENINLISKLRFNKEFEELNNYQRKNITSGPSKLCMAFNINRDNNWEDLCESSSLYVEDVFYNDFEIIETVRVGIDYAEEARDFLWRYYIKDNAFVSVK.

This sequence belongs to the DNA glycosylase MPG family.

The protein is Putative 3-methyladenine DNA glycosylase of Clostridium botulinum (strain Langeland / NCTC 10281 / Type F).